A 249-amino-acid polypeptide reads, in one-letter code: Bis(5'-nucleosyl)-tetraphosphatase PrpE [asymmetrical] (249 aa).

The protein belongs to the PrpE family. The cofactor is Ni(2+).

The enzyme catalyses P(1),P(4)-bis(5'-guanosyl) tetraphosphate + H2O = GMP + GTP + 2 H(+). In terms of biological role, asymmetrically hydrolyzes Ap4p to yield AMP and ATP. In Bacillus velezensis (strain DSM 23117 / BGSC 10A6 / LMG 26770 / FZB42) (Bacillus amyloliquefaciens subsp. plantarum), this protein is Bis(5'-nucleosyl)-tetraphosphatase PrpE [asymmetrical].